The primary structure comprises 254 residues: Small ribosomal subunit protein mS40 (254 aa).

Residues methionine 1–arginine 33 constitute a mitochondrion transit peptide. Serine 47 is modified (phosphoserine). The segment at tyrosine 218 to alanine 254 is disordered. Residues glycine 227–proline 240 are compositionally biased toward pro residues.

It belongs to the bacterial ribosomal protein bS18 family. Mitochondrion-specific ribosomal protein mS40 subfamily. As to quaternary structure, component of the mitochondrial ribosome small subunit (28S) which comprises a 12S rRNA and about 30 distinct proteins.

It is found in the mitochondrion. The protein is Small ribosomal subunit protein mS40 (Mrps18b) of Mus musculus (Mouse).